Reading from the N-terminus, the 453-residue chain is UDP-N-acetylmuramoylalanine--D-glutamate ligase (453 aa).

115-121 (GTNGKTT) lines the ATP pocket.

It belongs to the MurCDEF family.

The protein localises to the cytoplasm. The enzyme catalyses UDP-N-acetyl-alpha-D-muramoyl-L-alanine + D-glutamate + ATP = UDP-N-acetyl-alpha-D-muramoyl-L-alanyl-D-glutamate + ADP + phosphate + H(+). The protein operates within cell wall biogenesis; peptidoglycan biosynthesis. In terms of biological role, cell wall formation. Catalyzes the addition of glutamate to the nucleotide precursor UDP-N-acetylmuramoyl-L-alanine (UMA). This chain is UDP-N-acetylmuramoylalanine--D-glutamate ligase, found in Geotalea daltonii (strain DSM 22248 / JCM 15807 / FRC-32) (Geobacter daltonii).